Consider the following 262-residue polypeptide: Merozoite surface protein 2 (262 aa).

Residues 1-20 (MKVIKTLSIINFFIFVTFNI) form the signal peptide. Residues asparagine 22 and asparagine 36 are each glycosylated (N-linked (GlcNAc...) asparagine). Residues 44 to 188 (AESKPPTGTG…EQTESPELQS (145 aa)) are polymorphic region. The tract at residues 44-223 (AESKPPTGTG…DSQKECTDGN (180 aa)) is disordered. Over residues 51 to 66 (GTGGSGSAGSGAGASA) the composition is skewed to gly residues. Residues 67 to 111 (GNGANPGADAERSPSTPATPATPATTTTTTTTNDAEASTSTSSEN) show a composition bias toward low complexity. Positions 112–127 (PNHKNAETNPKGKGEV) are enriched in basic and acidic residues. 2 stretches are compositionally biased toward polar residues: residues 129-155 (KPNQ…NVPP) and 162-190 (KSPT…QSAP). N-linked (GlcNAc...) asparagine glycosylation occurs at asparagine 139. A glycan (N-linked (GlcNAc...) asparagine) is linked at asparagine 211. Residues cysteine 219 and cysteine 227 are joined by a disulfide bond. 2 N-linked (GlcNAc...) asparagine glycosylation sites follow: asparagine 235 and asparagine 236. Asparagine 236 carries the GPI-anchor amidated asparagine lipid modification. A propeptide spans 237-262 (SSNIASINKFVVLISATLVLSFAIFI) (removed in mature form).

It is found in the cell membrane. May play a role in the merozoite attachment to the erythrocyte. The chain is Merozoite surface protein 2 from Plasmodium falciparum (isolate Camp / Malaysia).